A 354-amino-acid chain; its full sequence is Chorismate synthase (354 aa).

Arg48 provides a ligand contact to NADP(+). FMN is bound by residues 126–128 (RAS), Ala278, 293–297 (KPIPS), and Arg319.

This sequence belongs to the chorismate synthase family. Homotetramer. FMNH2 is required as a cofactor.

The enzyme catalyses 5-O-(1-carboxyvinyl)-3-phosphoshikimate = chorismate + phosphate. It participates in metabolic intermediate biosynthesis; chorismate biosynthesis; chorismate from D-erythrose 4-phosphate and phosphoenolpyruvate: step 7/7. Its function is as follows. Catalyzes the anti-1,4-elimination of the C-3 phosphate and the C-6 proR hydrogen from 5-enolpyruvylshikimate-3-phosphate (EPSP) to yield chorismate, which is the branch point compound that serves as the starting substrate for the three terminal pathways of aromatic amino acid biosynthesis. This reaction introduces a second double bond into the aromatic ring system. This Desulfosudis oleivorans (strain DSM 6200 / JCM 39069 / Hxd3) (Desulfococcus oleovorans) protein is Chorismate synthase.